A 140-amino-acid polypeptide reads, in one-letter code: uncharacterized protein (140 aa).

Residues Lys-80–Leu-115 are disordered.

This is an uncharacterized protein from Homo sapiens (Human).